The following is a 242-amino-acid chain: GDSL esterase/lipase At5g62930 (242 aa).

Catalysis depends on S11, which acts as the Nucleophile. A disordered region spans residues 223-242 (PHHSHIDGKNPSKAFEERCL).

This sequence belongs to the 'GDSL' lipolytic enzyme family.

The chain is GDSL esterase/lipase At5g62930 from Arabidopsis thaliana (Mouse-ear cress).